We begin with the raw amino-acid sequence, 237 residues long: CDP-diacylglycerol--serine O-phosphatidyltransferase (237 aa).

The next 8 helical transmembrane spans lie at 3–23 (INPL…LGMM), 25–45 (IFYA…ASLI), 73–93 (VIAF…YNFG), 95–115 (IGMA…ARFN), 124–144 (YSFI…CVLL), 150–170 (FLEG…GVLM), 184–204 (WNLK…VRPL), and 207–227 (LSVF…FLMV).

Belongs to the CDP-alcohol phosphatidyltransferase class-I family.

The protein localises to the cell membrane. It carries out the reaction a CDP-1,2-diacyl-sn-glycerol + L-serine = a 1,2-diacyl-sn-glycero-3-phospho-L-serine + CMP + H(+). The chain is CDP-diacylglycerol--serine O-phosphatidyltransferase (pssA) from Helicobacter pylori (strain ATCC 700392 / 26695) (Campylobacter pylori).